The primary structure comprises 74 residues: QAIGPPFGLCFQCNQKTSSDCFNAKRCPPFHRTCYTLYKPDGGEEWAVKGCAKGCPTAGPDERVKCCHTPRCNN.

A Pyrrolidone carboxylic acid modification is found at Gln1. 5 disulfides stabilise this stretch: Cys10/Cys34, Cys13/Cys21, Cys27/Cys51, Cys55/Cys66, and Cys67/Cys72.

It belongs to the three-finger toxin family. Ancestral subfamily. Boigatoxin sub-subfamily. As to quaternary structure, monomer. The N-terminus is blocked. In terms of processing, contains 5 disulfide bonds. In terms of tissue distribution, expressed by the venom gland.

The protein localises to the secreted. Its function is as follows. Reptile-specific three-finger toxin that is lethal at low doses for lizards, but not for mice. Probably acts as a neurotoxin. This chain is Fulgimotoxin, found in Oxybelis fulgidus (Green vine snake).